A 66-amino-acid chain; its full sequence is Muscarinic toxin 1 (66 aa).

4 disulfides stabilise this stretch: C3-C24, C17-C42, C46-C58, and C59-C64.

Belongs to the three-finger toxin family. Short-chain subfamily. Aminergic toxin sub-subfamily. As to expression, expressed by the venom gland.

Its subcellular location is the secreted. Its function is as follows. Shows a non-competitive interaction with adrenergic and muscarinic receptors. Binds to alpha-2b (ADRA2B) (IC(50)=2.3 nM), alpha-1a (ADRA1A), alpha-1b (ADRA1B), and alpha-2c (ADRA2C) adrenergic receptors. Reversibly binds to M1 (CHRM1) muscarinic acetylcholine receptors, probably by interacting with the orthosteric site. Also reveals a slightly weaker effect at M3 (CHRM3) and M4 (CHRM4) receptors. The order of potency is ADRA2B&gt;&gt;CHRM1&gt;ADRA1A&gt;ADRA1B&gt;ADRA2C/CHRM4. This chain is Muscarinic toxin 1, found in Dendroaspis angusticeps (Eastern green mamba).